A 289-amino-acid chain; its full sequence is Probable prolyl 4-hydroxylase 10 (289 aa).

A helical; Signal-anchor for type II membrane protein transmembrane segment spans residues 20–40; that stretch reads LVFAVLIMSTFVILILLAFGI. The Lumenal portion of the chain corresponds to 41–289; sequence LSVPSNNAGS…KWLRVHEYKV (249 aa). The Fe2OG dioxygenase domain occupies 161–284; it reads HGEGLQVLHY…KWSSTKWLRV (124 aa). Residues His179 and Asp181 each coordinate Fe cation. Asn220 is a glycosylation site (N-linked (GlcNAc...) asparagine). Residue His265 participates in Fe cation binding. Lys275 contacts 2-oxoglutarate.

The protein belongs to the P4HA family. Fe(2+) is required as a cofactor. Requires L-ascorbate as cofactor.

It is found in the endoplasmic reticulum membrane. The enzyme catalyses L-prolyl-[collagen] + 2-oxoglutarate + O2 = trans-4-hydroxy-L-prolyl-[collagen] + succinate + CO2. Its function is as follows. Catalyzes the post-translational formation of 4-hydroxyproline in -Xaa-Pro-Gly- sequences in proline-rich peptide sequences of plant glycoproteins and other proteins. Hydroxyprolines are important constituent of many plant cell wall glycoproteins such as extensins, hydroxyproline-rich glycoproteins, lectins and arabinogalactan proteins. In Arabidopsis thaliana (Mouse-ear cress), this protein is Probable prolyl 4-hydroxylase 10.